The primary structure comprises 114 residues: Nucleoid-associated protein slr1847 (114 aa).

This sequence belongs to the YbaB/EbfC family. As to quaternary structure, homodimer.

It localises to the cytoplasm. It is found in the nucleoid. In terms of biological role, binds to DNA and alters its conformation. May be involved in regulation of gene expression, nucleoid organization and DNA protection. This is Nucleoid-associated protein slr1847 from Synechocystis sp. (strain ATCC 27184 / PCC 6803 / Kazusa).